Here is a 338-residue protein sequence, read N- to C-terminus: GTPase Obg (338 aa).

Residues 1-159 form the Obg domain; the sequence is MQFIDQAEIE…RRIRLELKLL (159 aa). The OBG-type G domain occupies 160-328; that stretch reads AEVGIIGLPN…MLQATWEQLD (169 aa). GTP-binding positions include 166–173, 191–195, 213–216, 280–283, and 309–311; these read GLPNAGKS, FTTLI, DIPG, NKLD, and SAV. The Mg(2+) site is built by S173 and T193.

This sequence belongs to the TRAFAC class OBG-HflX-like GTPase superfamily. OBG GTPase family. As to quaternary structure, monomer. Requires Mg(2+) as cofactor.

It localises to the cytoplasm. An essential GTPase which binds GTP, GDP and possibly (p)ppGpp with moderate affinity, with high nucleotide exchange rates and a fairly low GTP hydrolysis rate. Plays a role in control of the cell cycle, stress response, ribosome biogenesis and in those bacteria that undergo differentiation, in morphogenesis control. This chain is GTPase Obg, found in Gloeothece citriformis (strain PCC 7424) (Cyanothece sp. (strain PCC 7424)).